The sequence spans 257 residues: Large ribosomal subunit protein uL2 (257 aa).

The segment at 210-231 (PHGGGNHQHIGKASTVKRGTSA) is disordered.

The protein belongs to the universal ribosomal protein uL2 family.

The protein resides in the cytoplasm. The chain is Large ribosomal subunit protein uL2 (RpL8) from Mamestra brassicae (Cabbage moth).